Here is a 329-residue protein sequence, read N- to C-terminus: Serine/threonine-protein phosphatase PP2A catalytic subunit (329 aa).

Residues 1–25 (MDNNMEIDAARSPEPHHLSPTTDPG) are disordered. Positions 8 to 17 (DAARSPEPHH) are enriched in basic and acidic residues. Residues aspartate 77, histidine 79, aspartate 105, and asparagine 137 each contribute to the Mn(2+) site. Catalysis depends on histidine 138, which acts as the Proton donor. Positions 187 and 261 each coordinate Mn(2+). Leucine methyl ester is present on leucine 329.

It belongs to the PPP phosphatase family. PP-2A subfamily. Mn(2+) serves as cofactor.

The catalysed reaction is O-phospho-L-seryl-[protein] + H2O = L-seryl-[protein] + phosphate. The enzyme catalyses O-phospho-L-threonyl-[protein] + H2O = L-threonyl-[protein] + phosphate. Involved in hyphal morphogenesis. In Emericella nidulans (strain FGSC A4 / ATCC 38163 / CBS 112.46 / NRRL 194 / M139) (Aspergillus nidulans), this protein is Serine/threonine-protein phosphatase PP2A catalytic subunit (pphA).